The chain runs to 364 residues: Succinyl-diaminopimelate desuccinylase (364 aa).

His-64 contributes to the Zn(2+) binding site. The active site involves Asp-66. Asp-95 is a binding site for Zn(2+). The Proton acceptor role is filled by Glu-125. Zn(2+) is bound by residues Glu-126, Glu-154, and His-339.

The protein belongs to the peptidase M20A family. DapE subfamily. In terms of assembly, homodimer. Zn(2+) serves as cofactor. It depends on Co(2+) as a cofactor.

The enzyme catalyses N-succinyl-(2S,6S)-2,6-diaminopimelate + H2O = (2S,6S)-2,6-diaminopimelate + succinate. The protein operates within amino-acid biosynthesis; L-lysine biosynthesis via DAP pathway; LL-2,6-diaminopimelate from (S)-tetrahydrodipicolinate (succinylase route): step 3/3. Catalyzes the hydrolysis of N-succinyl-L,L-diaminopimelic acid (SDAP), forming succinate and LL-2,6-diaminopimelate (DAP), an intermediate involved in the bacterial biosynthesis of lysine and meso-diaminopimelic acid, an essential component of bacterial cell walls. The protein is Succinyl-diaminopimelate desuccinylase of Nitratiruptor sp. (strain SB155-2).